Here is a 1002-residue protein sequence, read N- to C-terminus: Lon protease homolog, mitochondrial (1002 aa).

In terms of domain architecture, Lon N-terminal spans 102-313; it reads VIALPLPHRP…LTLELVKKEM (212 aa). Residue 468–475 participates in ATP binding; the sequence is GPPGVGKT. Positions 811–995 constitute a Lon proteolytic domain; it reads QTPVGVVMGL…NEIFDIAFQS (185 aa). Catalysis depends on residues S901 and K944.

The protein belongs to the peptidase S16 family. Homohexamer or homoheptamer. Organized in a ring with a central cavity.

The protein localises to the mitochondrion matrix. It carries out the reaction Hydrolysis of proteins in presence of ATP.. Functionally, ATP-dependent serine protease that mediates the selective degradation of misfolded, unassembled or oxidatively damaged polypeptides as well as certain short-lived regulatory proteins in the mitochondrial matrix. May also have a chaperone function in the assembly of inner membrane protein complexes. Participates in the regulation of mitochondrial gene expression and in the maintenance of the integrity of the mitochondrial genome. Binds to mitochondrial DNA in a site-specific manner. This Oryza sativa subsp. indica (Rice) protein is Lon protease homolog, mitochondrial.